A 337-amino-acid chain; its full sequence is Putative NAC domain-containing protein 94 (337 aa).

The NAC domain occupies 20–191 (VLPGFRFHPT…AWAICRIFKK (172 aa)).

Its subcellular location is the nucleus. This is Putative NAC domain-containing protein 94 (ANAC094) from Arabidopsis thaliana (Mouse-ear cress).